The sequence spans 366 residues: Ribosomal RNA large subunit methyltransferase M (366 aa).

S-adenosyl-L-methionine is bound by residues Ser-188, Cys-221–Gly-224, Asp-240, Asp-260, and Asp-277. Lys-306 acts as the Proton acceptor in catalysis.

The protein belongs to the class I-like SAM-binding methyltransferase superfamily. RNA methyltransferase RlmE family. RlmM subfamily. In terms of assembly, monomer.

The protein resides in the cytoplasm. It carries out the reaction cytidine(2498) in 23S rRNA + S-adenosyl-L-methionine = 2'-O-methylcytidine(2498) in 23S rRNA + S-adenosyl-L-homocysteine + H(+). Its function is as follows. Catalyzes the 2'-O-methylation at nucleotide C2498 in 23S rRNA. The polypeptide is Ribosomal RNA large subunit methyltransferase M (Salmonella gallinarum (strain 287/91 / NCTC 13346)).